The primary structure comprises 446 residues: Probable glycine dehydrogenase (decarboxylating) subunit 1 (446 aa).

This sequence belongs to the GcvP family. N-terminal subunit subfamily. As to quaternary structure, the glycine cleavage system is composed of four proteins: P, T, L and H. In this organism, the P 'protein' is a heterodimer of two subunits.

The catalysed reaction is N(6)-[(R)-lipoyl]-L-lysyl-[glycine-cleavage complex H protein] + glycine + H(+) = N(6)-[(R)-S(8)-aminomethyldihydrolipoyl]-L-lysyl-[glycine-cleavage complex H protein] + CO2. In terms of biological role, the glycine cleavage system catalyzes the degradation of glycine. The P protein binds the alpha-amino group of glycine through its pyridoxal phosphate cofactor; CO(2) is released and the remaining methylamine moiety is then transferred to the lipoamide cofactor of the H protein. The chain is Probable glycine dehydrogenase (decarboxylating) subunit 1 from Protochlamydia amoebophila (strain UWE25).